The following is a 430-amino-acid chain: Enolase (430 aa).

Glutamine 163 serves as a coordination point for (2R)-2-phosphoglycerate. The active-site Proton donor is the glutamate 205. Positions 242, 286, and 313 each coordinate Mg(2+). 4 residues coordinate (2R)-2-phosphoglycerate: lysine 338, arginine 367, serine 368, and lysine 389. Catalysis depends on lysine 338, which acts as the Proton acceptor.

It belongs to the enolase family. The cofactor is Mg(2+).

It localises to the cytoplasm. Its subcellular location is the secreted. The protein localises to the cell surface. It catalyses the reaction (2R)-2-phosphoglycerate = phosphoenolpyruvate + H2O. Its pathway is carbohydrate degradation; glycolysis; pyruvate from D-glyceraldehyde 3-phosphate: step 4/5. Catalyzes the reversible conversion of 2-phosphoglycerate (2-PG) into phosphoenolpyruvate (PEP). It is essential for the degradation of carbohydrates via glycolysis. This is Enolase from Symbiobacterium thermophilum (strain DSM 24528 / JCM 14929 / IAM 14863 / T).